The following is a 283-amino-acid chain: 1D-myo-inositol 2-acetamido-2-deoxy-alpha-D-glucopyranoside deacetylase (283 aa).

H7, D10, and H148 together coordinate Zn(2+).

The protein belongs to the MshB deacetylase family. The cofactor is Zn(2+).

It catalyses the reaction 1D-myo-inositol 2-acetamido-2-deoxy-alpha-D-glucopyranoside + H2O = 1D-myo-inositol 2-amino-2-deoxy-alpha-D-glucopyranoside + acetate. Functionally, catalyzes the deacetylation of 1D-myo-inositol 2-acetamido-2-deoxy-alpha-D-glucopyranoside (GlcNAc-Ins) in the mycothiol biosynthesis pathway. This Gordonia bronchialis (strain ATCC 25592 / DSM 43247 / BCRC 13721 / JCM 3198 / KCTC 3076 / NBRC 16047 / NCTC 10667) (Rhodococcus bronchialis) protein is 1D-myo-inositol 2-acetamido-2-deoxy-alpha-D-glucopyranoside deacetylase.